Consider the following 47-residue polypeptide: uncharacterized protein (47 aa).

The first 25 residues, 1 to 25, serve as a signal peptide directing secretion; sequence MAHKCASAKLLSGIMALLFNGKSLL.

This is an uncharacterized protein from Saccharomyces cerevisiae (strain ATCC 204508 / S288c) (Baker's yeast).